The sequence spans 278 residues: Putative ABC transporter ATP-binding protein MJ1572 (278 aa).

One can recognise an ABC transporter domain in the interval 5-242 (YRLVDVSYKY…LDELNLDVPE (238 aa)). Residue 38–45 (GPNGAGKT) participates in ATP binding.

This sequence belongs to the ABC transporter superfamily.

It is found in the cell membrane. In terms of biological role, probably part of an ABC transporter complex. Responsible for energy coupling to the transport system. This is Putative ABC transporter ATP-binding protein MJ1572 from Methanocaldococcus jannaschii (strain ATCC 43067 / DSM 2661 / JAL-1 / JCM 10045 / NBRC 100440) (Methanococcus jannaschii).